The chain runs to 504 residues: Amidophosphoribosyltransferase (504 aa).

Cys-2 functions as the Nucleophile in the catalytic mechanism. The region spanning 2–235 is the Glutamine amidotransferase type-2 domain; that stretch reads CGIVGIVSQS…PGEAIYVTFE (234 aa). Mg(2+) is bound by residues Thr-305, Asp-367, and Asp-368.

It in the C-terminal section; belongs to the purine/pyrimidine phosphoribosyltransferase family. Mg(2+) is required as a cofactor.

The catalysed reaction is 5-phospho-beta-D-ribosylamine + L-glutamate + diphosphate = 5-phospho-alpha-D-ribose 1-diphosphate + L-glutamine + H2O. The protein operates within purine metabolism; IMP biosynthesis via de novo pathway; N(1)-(5-phospho-D-ribosyl)glycinamide from 5-phospho-alpha-D-ribose 1-diphosphate: step 1/2. Functionally, catalyzes the formation of phosphoribosylamine from phosphoribosylpyrophosphate (PRPP) and glutamine. This Pasteurella multocida (strain Pm70) protein is Amidophosphoribosyltransferase.